The sequence spans 265 residues: 3-methyl-2-oxobutanoate hydroxymethyltransferase (265 aa).

Asp-44 and Asp-83 together coordinate Mg(2+). Residues 44-45, Asp-83, and Lys-113 contribute to the 3-methyl-2-oxobutanoate site; that span reads DS. Position 115 (Glu-115) interacts with Mg(2+). Catalysis depends on Glu-182, which acts as the Proton acceptor.

The protein belongs to the PanB family. In terms of assembly, homodecamer; pentamer of dimers. Mg(2+) is required as a cofactor.

The protein resides in the cytoplasm. It catalyses the reaction 3-methyl-2-oxobutanoate + (6R)-5,10-methylene-5,6,7,8-tetrahydrofolate + H2O = 2-dehydropantoate + (6S)-5,6,7,8-tetrahydrofolate. It participates in cofactor biosynthesis; (R)-pantothenate biosynthesis; (R)-pantoate from 3-methyl-2-oxobutanoate: step 1/2. Functionally, catalyzes the reversible reaction in which hydroxymethyl group from 5,10-methylenetetrahydrofolate is transferred onto alpha-ketoisovalerate to form ketopantoate. This Aquifex aeolicus (strain VF5) protein is 3-methyl-2-oxobutanoate hydroxymethyltransferase.